A 593-amino-acid chain; its full sequence is Efflux pump FUB11 (593 aa).

Residues 1-45 (MAIDPQPSSPSLSSETIANDTIGNDNNVNEPSVEPKTQEHQHTVP) are disordered. The segment covering 9–30 (SPSLSSETIANDTIGNDNNVNE) has biased composition (polar residues). Asparagine 19 carries an N-linked (GlcNAc...) asparagine glycan. 12 helical membrane passes run 98–118 (WAFV…SSAY), 135–155 (VATL…LVWA), 167–187 (FFFT…AGSI), 195–215 (FLTG…IADM), 227–247 (MFSG…GFLG), 254–274 (WLHG…TVFI), 337–357 (IYIS…PIVF), 367–387 (IGGL…ISFA), 410–430 (LPPA…FAWT), 438–458 (IVPI…FMAL), 468–488 (IFAA…GAAF), and 503–523 (WASS…FLFY). Residues 570 to 593 (THNSHASAAHSHGHRRSLSYTRSA) are disordered.

The protein belongs to the major facilitator superfamily. DHA1 family. Polyamines/proton antiporter (TC 2.A.1.2.16) subfamily.

Its subcellular location is the cell membrane. Efflux pump involved in export of fusaric acid, a mycotoxin with low to moderate toxicity to animals and humans, but with high phytotoxic properties. Constitutes a self-protecting mechanism of the fungus against critical levels of FSA within the cell. The chain is Efflux pump FUB11 from Gibberella moniliformis (strain M3125 / FGSC 7600) (Maize ear and stalk rot fungus).